The following is a 313-amino-acid chain: Type II methyltransferase M.NlaX (313 aa).

Positions 2–308 (FKIIDLFAGI…EQMKAALSAV (307 aa)) constitute an SAM-dependent MTase C5-type domain. Cys-74 is an active-site residue.

The protein belongs to the class I-like SAM-binding methyltransferase superfamily. C5-methyltransferase family.

The enzyme catalyses a 2'-deoxycytidine in DNA + S-adenosyl-L-methionine = a 5-methyl-2'-deoxycytidine in DNA + S-adenosyl-L-homocysteine + H(+). Functionally, a methylase, recognizes the double-stranded sequence 5'-CCNGG-3' and methylates C-2 on both strands. May be the equivalent of dcm in this bacteria, or it may protect the DNA from cleavage by the putative NlaXP endonuclease. This Neisseria lactamica protein is Type II methyltransferase M.NlaX (nlaXM).